Reading from the N-terminus, the 223-residue chain is Phosphoribosylformylglycinamidine synthase subunit PurQ (223 aa).

A Glutamine amidotransferase type-1 domain is found at 4-223 (FAVIVFPGTN…FKSIVEWMKK (220 aa)). Catalysis depends on cysteine 85, which acts as the Nucleophile. Active-site residues include histidine 196 and glutamate 198.

As to quaternary structure, part of the FGAM synthase complex composed of 1 PurL, 1 PurQ and 2 PurS subunits.

It is found in the cytoplasm. It carries out the reaction N(2)-formyl-N(1)-(5-phospho-beta-D-ribosyl)glycinamide + L-glutamine + ATP + H2O = 2-formamido-N(1)-(5-O-phospho-beta-D-ribosyl)acetamidine + L-glutamate + ADP + phosphate + H(+). The enzyme catalyses L-glutamine + H2O = L-glutamate + NH4(+). It functions in the pathway purine metabolism; IMP biosynthesis via de novo pathway; 5-amino-1-(5-phospho-D-ribosyl)imidazole from N(2)-formyl-N(1)-(5-phospho-D-ribosyl)glycinamide: step 1/2. Its function is as follows. Part of the phosphoribosylformylglycinamidine synthase complex involved in the purines biosynthetic pathway. Catalyzes the ATP-dependent conversion of formylglycinamide ribonucleotide (FGAR) and glutamine to yield formylglycinamidine ribonucleotide (FGAM) and glutamate. The FGAM synthase complex is composed of three subunits. PurQ produces an ammonia molecule by converting glutamine to glutamate. PurL transfers the ammonia molecule to FGAR to form FGAM in an ATP-dependent manner. PurS interacts with PurQ and PurL and is thought to assist in the transfer of the ammonia molecule from PurQ to PurL. In Pyrococcus horikoshii (strain ATCC 700860 / DSM 12428 / JCM 9974 / NBRC 100139 / OT-3), this protein is Phosphoribosylformylglycinamidine synthase subunit PurQ.